We begin with the raw amino-acid sequence, 212 residues long: Fe/S biogenesis protein NfuA (212 aa).

Residues C169 and C172 each contribute to the [4Fe-4S] cluster site.

The protein belongs to the NfuA family. In terms of assembly, homodimer. It depends on [4Fe-4S] cluster as a cofactor.

Involved in iron-sulfur cluster biogenesis. Binds a 4Fe-4S cluster, can transfer this cluster to apoproteins, and thereby intervenes in the maturation of Fe/S proteins. Could also act as a scaffold/chaperone for damaged Fe/S proteins. This is Fe/S biogenesis protein NfuA from Acinetobacter baumannii (strain SDF).